The sequence spans 400 residues: Acetylornithine aminotransferase (400 aa).

Residues 106-107 (GA) and Phe-132 contribute to the pyridoxal 5'-phosphate site. Residue Arg-135 participates in N(2)-acetyl-L-ornithine binding. 217–220 (DEVQ) serves as a coordination point for pyridoxal 5'-phosphate. An N6-(pyridoxal phosphate)lysine modification is found at Lys-246. Ser-274 is a binding site for N(2)-acetyl-L-ornithine. A pyridoxal 5'-phosphate-binding site is contributed by Thr-275.

It belongs to the class-III pyridoxal-phosphate-dependent aminotransferase family. ArgD subfamily. Homodimer. Requires pyridoxal 5'-phosphate as cofactor.

Its subcellular location is the cytoplasm. The enzyme catalyses N(2)-acetyl-L-ornithine + 2-oxoglutarate = N-acetyl-L-glutamate 5-semialdehyde + L-glutamate. It participates in amino-acid biosynthesis; L-arginine biosynthesis; N(2)-acetyl-L-ornithine from L-glutamate: step 4/4. The sequence is that of Acetylornithine aminotransferase from Streptomyces clavuligerus.